Here is a 257-residue protein sequence, read N- to C-terminus: Pimeloyl-[acyl-carrier protein] methyl ester esterase (257 aa).

The AB hydrolase-1 domain maps to 15–241; it reads HLVLLHGWGL…KAAHAPFVSH (227 aa). Residues W22, 82–83, and 143–147 contribute to the substrate site; these read SL and FLALQ. S82 serves as the catalytic Nucleophile. Residues D207 and H235 contribute to the active site. H235 contacts substrate.

It belongs to the AB hydrolase superfamily. Carboxylesterase BioH family. Monomer.

Its subcellular location is the cytoplasm. It carries out the reaction 6-carboxyhexanoyl-[ACP] methyl ester + H2O = 6-carboxyhexanoyl-[ACP] + methanol + H(+). It participates in cofactor biosynthesis; biotin biosynthesis. Functionally, the physiological role of BioH is to remove the methyl group introduced by BioC when the pimeloyl moiety is complete. It allows to synthesize pimeloyl-ACP via the fatty acid synthetic pathway through the hydrolysis of the ester bonds of pimeloyl-ACP esters. The sequence is that of Pimeloyl-[acyl-carrier protein] methyl ester esterase from Klebsiella pneumoniae subsp. pneumoniae (strain ATCC 700721 / MGH 78578).